Reading from the N-terminus, the 1041-residue chain is MIFFNFKLNRMICPIFFLYIINVLFTQYFIKCEGNKVTVISHNNGHNDNLDVNKNGVISQENVFDTSESLNLPSNKKVGSDDLNTTTISFTVPDNLENEVKVVSSSESGKGATVSHTKVTSEGLSDTQPNVTQSVSSSTHTPGSLDSTMSTEQHSSVSQSSLPTESSSETLNKATVPEIPIQINSGLLKNYNGVKVTGSCGSYFRVYLVPHILIYALTKYSVIQLESLFNDNARIDVEHKGELQNKCSEGYHFKLVVYITHNVLNLKWKTYKPNEESKSEDSDVRKYRIPKLERPFTSIQVYTANSKAGVIETKNYNIRTDIPDTCDAIATDCFLNGNVNIEKCFQCTLLVQKKDKSHECFKYVSSEMKKKMNEIKVKAQDDFNPNEYKLIESIDNILSKIYKKANKPFEISKDLINLEDLDYQFKNELLEYCKLLKKVDTSGTLEEYELGNAEDIYNNLTRLLKSHSDENIVTLQGKLRNTAICIKNVDEWILNKRGLTLPSESPSESSSKSDSYLNTFNDKDKNEDKDDMSKNSKEEFKNDDKENSDDQNNNDSNKKDDENNINNGDTNYVYDFDDDDYDNNSYEKDMYESPIKENKNGVIDLEKYGNQIKLKSPYFKNSKYCNYEYCNRWRDKTSCISQIEVEEQGNCGLCWIFASKLHFETIRCMRGYGHFRSSALYVANCSKRKPIDRCEEGSNPLEFLRILDEKKFLPLESNYPYSYTSAGNSCPKLPNSWTNLWGDTKLLFNKKVHRYIGNKGFISHETSYFKNNMDLFIDMVKREVQNKGSVIIYIKTQDVIGYDFNGKGVHSMCGDRTPDHAANIIGYGNYINKKGEKRSYWLIRNSWSYYWGDEGNFRVDMLGPKNCLYNFIHTVVFFKLDLGTIHVPKKKSWKKNVYFLRHNTDFMYSLYYNNYEPETSQDFESENDYDNAFVHGQSDESDETNKEGKNVHNSVEKKIQILHILKHIKDSQIKRGLVKYDNINETKDEHTCSRVNSQDAEKYEECKKFCLTKWNECKDHYSPGYCLTDLYKGEDCNFCYV.

The first 34 residues, 1–34 (MIFFNFKLNRMICPIFFLYIINVLFTQYFIKCEG), serve as a signal peptide directing secretion. Asn84 carries N-linked (GlcNAc...) asparagine glycosylation. Residues 101 to 111 (KVVSSSESGKG) are compositionally biased toward low complexity. Residues 101–173 (KVVSSSESGK…TESSSETLNK (73 aa)) form a disordered region. The span at 114–149 (VSHTKVTSEGLSDTQPNVTQSVSSSTHTPGSLDSTM) shows a compositional bias: polar residues. Asn130 carries an N-linked (GlcNAc...) asparagine glycan. A compositionally biased stretch (low complexity) spans 150–168 (STEQHSSVSQSSLPTESSS). Asn459 carries an N-linked (GlcNAc...) asparagine glycan. Positions 500–577 (TLPSESPSES…GDTNYVYDFD (78 aa)) are disordered. Residues 502 to 515 (PSESPSESSSKSDS) show a composition bias toward low complexity. Basic and acidic residues predominate over residues 521–545 (NDKDKNEDKDDMSKNSKEEFKNDDK). N-linked (GlcNAc...) asparagine glycosylation is present at Asn554. Positions 564-574 (NINNGDTNYVY) are enriched in low complexity. An N-linked (GlcNAc...) asparagine glycan is attached at Asn583. Cys654 is an active-site residue. Asn684 carries N-linked (GlcNAc...) asparagine glycosylation. Catalysis depends on residues His820 and Asn845. Asn984 carries an N-linked (GlcNAc...) asparagine glycan.

Belongs to the peptidase C1 family. Just prior to merozoite egress from host erythrocytes, proteolytically cleaved by SUB1 to generate the active 75kDa form.

Its subcellular location is the parasitophorous vacuole lumen. It localises to the parasitophorous vacuole membrane. In terms of biological role, cysteine protease which plays an essential role in merozoite egress from host erythrocytes. May cleave host SPTB/beta spectrin and ANK1/ankyrin-1 which disrupts host erythrocyte actin cytoskeleton and leads to host erythrocyte cell membrane rupture. The protein is Serine-repeat antigen protein 6 of Plasmodium falciparum.